Consider the following 197-residue polypeptide: MAKRTAEVERTTGETAVRVWVDLDGEGAAELDCGVPFFEHMLAQVARHGGVDLRVQAKGDTWIDDHHTVEDVGIALGQALARAWGDKAGLTRYGHAYVPLDEALSRAVLDLSGRPGLVYNAELPRAHVGRFDTELVEEFFRALTSHAAMTAHLDVLRGRNAHHMVECLFKAFGRALRQAVSTDERAGGRVPSTKGAL.

The protein belongs to the imidazoleglycerol-phosphate dehydratase family.

The protein resides in the cytoplasm. It catalyses the reaction D-erythro-1-(imidazol-4-yl)glycerol 3-phosphate = 3-(imidazol-4-yl)-2-oxopropyl phosphate + H2O. Its pathway is amino-acid biosynthesis; L-histidine biosynthesis; L-histidine from 5-phospho-alpha-D-ribose 1-diphosphate: step 6/9. The chain is Imidazoleglycerol-phosphate dehydratase from Halorhodospira halophila (strain DSM 244 / SL1) (Ectothiorhodospira halophila (strain DSM 244 / SL1)).